A 448-amino-acid chain; its full sequence is Extracellular serine protease (448 aa).

The signal sequence occupies residues 1-20 (MKLSHLSLAIISAITLAACG). The disordered stretch occupies residues 87-109 (KELENQASDDEVDPTKTGVVGNL).

Belongs to the peptidase S17 family. A divalent metal cation is required as a cofactor.

Functionally, this enzyme is a chymotrypsin-like serine protease. Degrades a variety of substrates present in the skin and hoof of the sheep, including elastin, keratin, fibrinogen and collagen. It seems to play an important role in the pathogenesis of sheep footrot. This is Extracellular serine protease (prvA) from Dichelobacter nodosus (Bacteroides nodosus).